The sequence spans 396 residues: Flap endonuclease 1 (396 aa).

The segment at 1–104 is N-domain; sequence MGIKHLYQLI…GELAKRFQRK (104 aa). Mg(2+) is bound at residue D34. DNA is bound by residues R47 and R70. D86, E158, E160, D179, and D181 together coordinate Mg(2+). The segment at 122–255 is I-domain; sequence DVEKFSRRTV…STALKLIRDH (134 aa). A DNA-binding site is contributed by E158. Residues G233 and D235 each contribute to the DNA site. D235 lines the Mg(2+) pocket. The tract at residues 338 to 396 is disordered; sequence MKSAQQSRLEGFFKPVERTPEEKASLKRKADEKLSEKKKKQKEEAKAKKQAKSKPRTAG. The segment at 342–350 is interaction with PCNA; the sequence is QQSRLEGFF. Over residues 352-384 the composition is skewed to basic and acidic residues; sequence PVERTPEEKASLKRKADEKLSEKKKKQKEEAKA. Over residues 385–396 the composition is skewed to basic residues; it reads KKQAKSKPRTAG.

It belongs to the XPG/RAD2 endonuclease family. FEN1 subfamily. In terms of assembly, interacts with PCNA. Three molecules of FEN1 bind to one PCNA trimer with each molecule binding to one PCNA monomer. PCNA stimulates the nuclease activity without altering cleavage specificity. The cofactor is Mg(2+). Phosphorylated. Phosphorylation upon DNA damage induces relocalization to the nuclear plasma.

It localises to the nucleus. Its subcellular location is the nucleolus. The protein resides in the nucleoplasm. It is found in the mitochondrion. Structure-specific nuclease with 5'-flap endonuclease and 5'-3' exonuclease activities involved in DNA replication and repair. During DNA replication, cleaves the 5'-overhanging flap structure that is generated by displacement synthesis when DNA polymerase encounters the 5'-end of a downstream Okazaki fragment. It enters the flap from the 5'-end and then tracks to cleave the flap base, leaving a nick for ligation. Also involved in the long patch base excision repair (LP-BER) pathway, by cleaving within the apurinic/apyrimidinic (AP) site-terminated flap. Acts as a genome stabilization factor that prevents flaps from equilibrating into structures that lead to duplications and deletions. Also possesses 5'-3' exonuclease activity on nicked or gapped double-stranded DNA, and exhibits RNase H activity. Also involved in replication and repair of rDNA and in repairing mitochondrial DNA. This chain is Flap endonuclease 1, found in Phaeosphaeria nodorum (strain SN15 / ATCC MYA-4574 / FGSC 10173) (Glume blotch fungus).